A 318-amino-acid polypeptide reads, in one-letter code: AT-hook motif nuclear-localized protein 7 (318 aa).

Disordered regions lie at residues 1–76 and 241–318; these read METS…PSSS and SDQQ…LPVD. A Bipartite nuclear localization signal motif is present at residues 56–64; sequence KKRRGRPRK. Residues 56–68 constitute a DNA-binding region (a.T hook); the sequence is KKRRGRPRKYEAN. In terms of domain architecture, PPC spans 120-259; sequence GSNFTPHVIT…RKQRVEHAPA (140 aa). Residues 243–256 are compositionally biased toward basic and acidic residues; the sequence is QQDHQKPRKQRVEH. The span at 264 to 274 shows a compositional bias: pro residues; that stretch reads VPPPPSPPPPA. Polar residues predominate over residues 288–312; that stretch reads PPSSFGISSWTNGQDMPRNSATDIN.

The protein resides in the nucleus. In terms of biological role, transcription factor that specifically binds AT-rich DNA sequences related to the nuclear matrix attachment regions (MARs). In Arabidopsis thaliana (Mouse-ear cress), this protein is AT-hook motif nuclear-localized protein 7.